Reading from the N-terminus, the 297-residue chain is MKRPDYRTLQALDAVIRERGFERAAQKLCITQSAVSQRIKQLENMFGQPLLVRTVPPRPTEQGQKLLALLRQVELLEEEWLGDEQTGSTPLLLSLAVNADSLATWLLPALAPVLADSPIRLNLQVEDETRTQERLRRGEVVGAVSIQHQALPSCLVDKLGALDYLFVASKPFAERYFPNGVTRSSLLKAPAVAFDHLDDMHQAFLQQNFDLPPGSVPCHIVNSSEAFVQLARQGTTCCMIPHLQIEQELESGELINLTPGLLQRRMLYWHRFAPESRMMRKVTDALLEYGHKVLRQD.

In terms of domain architecture, HTH lysR-type spans 4 to 60; sequence PDYRTLQALDAVIRERGFERAAQKLCITQSAVSQRIKQLENMFGQPLLVRTVPPRPT. Residues 21–40 constitute a DNA-binding region (H-T-H motif); it reads FERAAQKLCITQSAVSQRIK.

It belongs to the LysR transcriptional regulatory family. As to quaternary structure, homodimer.

Controls the transcription of genes involved in arginine and lysine metabolism. This chain is HTH-type transcriptional regulator ArgP, found in Salmonella arizonae (strain ATCC BAA-731 / CDC346-86 / RSK2980).